The primary structure comprises 386 residues: Hemagglutinin-esterase (386 aa).

The signal sequence occupies residues 1-11 (MLIIFLFFYFC). The interval 1–121 (MLIIFLFFYF…SNDVWLLNKV (121 aa)) is esterase domain 1. Over 12–359 (YGFNEPLNVV…PICVYDFLPI (348 aa)) the chain is Virion surface. The active-site Nucleophile is serine 34. The cysteines at positions 38 and 59 are disulfide-linked. N-linked (GlcNAc...) asparagine; by host glycans are attached at residues asparagine 83, asparagine 110, asparagine 145, and asparagine 168. Cysteine 107 and cysteine 154 are joined by a disulfide. Residues 122–236 (RFYRALYSNM…GSYKVSTTAP (115 aa)) are receptor binding. Disulfide bonds link cysteine 180–cysteine 246, cysteine 188–cysteine 219, and cysteine 277–cysteine 282. The esterase domain 2 stretch occupies residues 237-349 (FLSLPTKALC…RCPTSSIIKH (113 aa)). The N-linked (GlcNAc...) asparagine; by host glycan is linked to asparagine 286. Residues aspartate 296 and histidine 299 each act as charge relay system in the active site. Cysteine 317 and cysteine 341 are disulfide-bonded. Asparagine 328 is a glycosylation site (N-linked (GlcNAc...) asparagine; by host). The chain crosses the membrane as a helical span at residues 360-380 (ILQGILLCLALLFVVFLLFLL). At 381-386 (YNDKSH) the chain is on the intravirion side.

It belongs to the influenza type C/coronaviruses hemagglutinin-esterase family. In terms of assembly, homodimer; disulfide-linked. Forms a complex with the M protein in the pre-Golgi. Associates then with S-M complex to form a ternary complex S-M-HE. N-glycosylated in the host RER.

The protein resides in the virion membrane. Its subcellular location is the host cell membrane. It carries out the reaction N-acetyl-9-O-acetylneuraminate + H2O = N-acetylneuraminate + acetate + H(+). The enzyme catalyses N-acetyl-4-O-acetylneuraminate + H2O = N-acetylneuraminate + acetate + H(+). In terms of biological role, structural protein that makes short spikes at the surface of the virus. Contains receptor binding and receptor-destroying activities. Mediates de-O-acetylation of N-acetyl-4-O-acetylneuraminic acid, which is probably the receptor determinant recognized by the virus on the surface of erythrocytes and susceptible cells. This receptor-destroying activity is important for virus release as it probably helps preventing self-aggregation and ensures the efficient spread of the progeny virus from cell to cell. May serve as a secondary viral attachment protein for initiating infection, the spike protein being the major one. May become a target for both the humoral and the cellular branches of the immune system. This is Hemagglutinin-esterase from Homo sapiens (Human).